A 219-amino-acid polypeptide reads, in one-letter code: 3-dehydroquinate dehydratase (219 aa).

Residues serine 10, 29 to 31, and arginine 59 contribute to the 3-dehydroquinate site; that span reads EVR. Histidine 116 functions as the Proton donor/acceptor in the catalytic mechanism. Residue lysine 142 is the Schiff-base intermediate with substrate of the active site. Positions 180 and 203 each coordinate 3-dehydroquinate.

It belongs to the type-I 3-dehydroquinase family. Homodimer.

The catalysed reaction is 3-dehydroquinate = 3-dehydroshikimate + H2O. Its pathway is metabolic intermediate biosynthesis; chorismate biosynthesis; chorismate from D-erythrose 4-phosphate and phosphoenolpyruvate: step 3/7. Involved in the third step of the chorismate pathway, which leads to the biosynthesis of aromatic amino acids. Catalyzes the cis-dehydration of 3-dehydroquinate (DHQ) and introduces the first double bond of the aromatic ring to yield 3-dehydroshikimate. In Methanocella arvoryzae (strain DSM 22066 / NBRC 105507 / MRE50), this protein is 3-dehydroquinate dehydratase.